Reading from the N-terminus, the 336-residue chain is GTPase Obg (336 aa).

The Obg domain maps to 1-159 (MKFVDSATVF…LELAMELKLM (159 aa)). The segment at 120-143 (GGHGGRGNQHFATSTNQAPRRSEP) is disordered. Polar residues predominate over residues 129 to 138 (HFATSTNQAP). Residues 160–323 (ADVGLVGFPN…LKDELWRQVS (164 aa)) form the OBG-type G domain. Residues 166 to 173 (GFPNAGKS), 191 to 195 (FTTLV), 213 to 216 (DIPG), 280 to 283 (TKMD), and 304 to 306 (SSV) contribute to the GTP site. Mg(2+) contacts are provided by Ser173 and Thr193.

It belongs to the TRAFAC class OBG-HflX-like GTPase superfamily. OBG GTPase family. In terms of assembly, monomer. Mg(2+) serves as cofactor.

It localises to the cytoplasm. Its function is as follows. An essential GTPase which binds GTP, GDP and possibly (p)ppGpp with moderate affinity, with high nucleotide exchange rates and a fairly low GTP hydrolysis rate. Plays a role in control of the cell cycle, stress response, ribosome biogenesis and in those bacteria that undergo differentiation, in morphogenesis control. In Chlorobium phaeovibrioides (strain DSM 265 / 1930) (Prosthecochloris vibrioformis (strain DSM 265)), this protein is GTPase Obg.